Reading from the N-terminus, the 170-residue chain is Photosystem I assembly protein Ycf3 (170 aa).

TPR repeat units follow at residues 35–68 (AFTH…EIDP), 72–105 (SYIL…NSSL), and 120–153 (GEQA…APSN).

Belongs to the Ycf3 family.

The protein resides in the plastid. It is found in the chloroplast thylakoid membrane. Its function is as follows. Essential for the assembly of the photosystem I (PSI) complex. May act as a chaperone-like factor to guide the assembly of the PSI subunits. The polypeptide is Photosystem I assembly protein Ycf3 (Anthoceros angustus (Hornwort)).